The sequence spans 134 residues: Translation initiation factor 2 subunit beta (134 aa).

Belongs to the eIF-2-beta/eIF-5 family. In terms of assembly, heterotrimer composed of an alpha, a beta and a gamma chain.

Its function is as follows. eIF-2 functions in the early steps of protein synthesis by forming a ternary complex with GTP and initiator tRNA. This is Translation initiation factor 2 subunit beta from Pyrobaculum calidifontis (strain DSM 21063 / JCM 11548 / VA1).